The primary structure comprises 414 residues: Serine hydroxymethyltransferase (414 aa).

(6S)-5,6,7,8-tetrahydrofolate contacts are provided by residues Leu-116 and 120 to 122 (GHL). Residue Lys-224 is modified to N6-(pyridoxal phosphate)lysine. (6S)-5,6,7,8-tetrahydrofolate is bound by residues Glu-240 and 348 to 350 (SPF).

This sequence belongs to the SHMT family. As to quaternary structure, homodimer. Pyridoxal 5'-phosphate serves as cofactor.

Its subcellular location is the cytoplasm. It carries out the reaction (6R)-5,10-methylene-5,6,7,8-tetrahydrofolate + glycine + H2O = (6S)-5,6,7,8-tetrahydrofolate + L-serine. Its pathway is one-carbon metabolism; tetrahydrofolate interconversion. The protein operates within amino-acid biosynthesis; glycine biosynthesis; glycine from L-serine: step 1/1. Its function is as follows. Catalyzes the reversible interconversion of serine and glycine with tetrahydrofolate (THF) serving as the one-carbon carrier. This reaction serves as the major source of one-carbon groups required for the biosynthesis of purines, thymidylate, methionine, and other important biomolecules. Also exhibits THF-independent aldolase activity toward beta-hydroxyamino acids, producing glycine and aldehydes, via a retro-aldol mechanism. The protein is Serine hydroxymethyltransferase of Campylobacter concisus (strain 13826).